Consider the following 484-residue polypeptide: Protein nucleotidyltransferase YdiU (484 aa).

ATP is bound by residues glycine 87, glycine 89, arginine 90, lysine 110, aspartate 122, glycine 123, arginine 173, and arginine 180. The active-site Proton acceptor is aspartate 249. The Mg(2+) site is built by asparagine 250 and aspartate 259. An ATP-binding site is contributed by aspartate 259. A disordered region spans residues 463–484 (EQEKYAELPPPSDRPYRTFCGT).

This sequence belongs to the SELO family. Mg(2+) is required as a cofactor. Mn(2+) serves as cofactor.

The catalysed reaction is L-seryl-[protein] + ATP = 3-O-(5'-adenylyl)-L-seryl-[protein] + diphosphate. It carries out the reaction L-threonyl-[protein] + ATP = 3-O-(5'-adenylyl)-L-threonyl-[protein] + diphosphate. It catalyses the reaction L-tyrosyl-[protein] + ATP = O-(5'-adenylyl)-L-tyrosyl-[protein] + diphosphate. The enzyme catalyses L-histidyl-[protein] + UTP = N(tele)-(5'-uridylyl)-L-histidyl-[protein] + diphosphate. The catalysed reaction is L-seryl-[protein] + UTP = O-(5'-uridylyl)-L-seryl-[protein] + diphosphate. It carries out the reaction L-tyrosyl-[protein] + UTP = O-(5'-uridylyl)-L-tyrosyl-[protein] + diphosphate. Functionally, nucleotidyltransferase involved in the post-translational modification of proteins. It can catalyze the addition of adenosine monophosphate (AMP) or uridine monophosphate (UMP) to a protein, resulting in modifications known as AMPylation and UMPylation. The polypeptide is Protein nucleotidyltransferase YdiU (Geobacillus kaustophilus (strain HTA426)).